A 327-amino-acid chain; its full sequence is Interleukin-12 subunit beta (327 aa).

A signal peptide spans Met-1–Ala-22. The 84-residue stretch at Ile-23 to Lys-106 folds into the Ig-like C2-type domain. Cys-50 and Cys-90 are joined by a disulfide. N-linked (GlcNAc...) asparagine glycosylation is found at Asn-125, Asn-135, Asn-223, and Asn-315. The Fibronectin type-III domain occupies Pro-238–Asn-327.

It belongs to the IL-12B family. Heterodimer with IL12A; disulfide-linked. The heterodimer is known as interleukin IL-12. Heterodimer with IL23A; disulfide-linked. The heterodimer is known as interleukin IL-23. Also secreted as a monomer. Interacts with NBR1; this interaction promotes IL-12 secretion.

The protein localises to the secreted. In terms of biological role, cytokine that can act as a growth factor for activated T and NK cells, enhance the lytic activity of NK/lymphokine-activated killer cells, and stimulate the production of IFN-gamma by resting PBMC. Its function is as follows. Associates with IL23A to form the IL-23 interleukin, a heterodimeric cytokine which functions in innate and adaptive immunity. IL-23 may constitute with IL-17 an acute response to infection in peripheral tissues. IL-23 binds to a heterodimeric receptor complex composed of IL12RB1 and IL23R, activates the Jak-Stat signaling cascade, stimulates memory rather than naive T-cells and promotes production of pro-inflammatory cytokines. IL-23 induces autoimmune inflammation and thus may be responsible for autoimmune inflammatory diseases and may be important for tumorigenesis. In Sigmodon hispidus (Hispid cotton rat), this protein is Interleukin-12 subunit beta (IL12B).